Consider the following 1341-residue polypeptide: DNA-directed RNA polymerase subunit beta (1341 aa).

The protein belongs to the RNA polymerase beta chain family. The RNAP catalytic core consists of 2 alpha, 1 beta, 1 beta' and 1 omega subunit. When a sigma factor is associated with the core the holoenzyme is formed, which can initiate transcription.

The catalysed reaction is RNA(n) + a ribonucleoside 5'-triphosphate = RNA(n+1) + diphosphate. Functionally, DNA-dependent RNA polymerase catalyzes the transcription of DNA into RNA using the four ribonucleoside triphosphates as substrates. This chain is DNA-directed RNA polymerase subunit beta, found in Pseudoalteromonas translucida (strain TAC 125).